We begin with the raw amino-acid sequence, 185 residues long: Ribosome maturation factor RimP (185 aa).

The protein belongs to the RimP family.

The protein resides in the cytoplasm. In terms of biological role, required for maturation of 30S ribosomal subunits. This chain is Ribosome maturation factor RimP, found in Magnetococcus marinus (strain ATCC BAA-1437 / JCM 17883 / MC-1).